The chain runs to 758 residues: Matrix metalloproteinase-2 (758 aa).

Positions 1-17 are cleaved as a signal peptide; sequence MFSKYVLATLLALFAQS. Histidine 257 provides a ligand contact to Zn(2+). The active site involves glutamate 258. Residues histidine 261 and histidine 267 each contribute to the Zn(2+) site. Residues 335–514 form a disordered region; it reads AYWPWNNPSN…HNKPRKPKPD (180 aa). Over residues 338 to 348 the composition is skewed to low complexity; that stretch reads PWNNPSNNPNN. The segment covering 349–476 has biased composition (basic and acidic residues); it reads DRNRARERQE…EWERRNRNGA (128 aa). A compositionally biased stretch (low complexity) spans 479 to 494; the sequence is PVTPTANTTPRPTNKP. Residues 499-510 are compositionally biased toward basic residues; it reads HRQHHHHNKPRK. 4 Hemopexin repeats span residues 513 to 561, 565 to 610, 612 to 659, and 660 to 707; these read PDSC…WSAL, LTKV…GLPP, LTHI…WSGV, and GYNI…WMQC. Cysteine 516 and cysteine 707 are joined by a disulfide. A helical membrane pass occupies residues 739-756; that stretch reads LRINHFILSILLLAIANW. Topologically, residues 757–758 are cytoplasmic; it reads RS.

This sequence belongs to the peptidase M10A family. The cofactor is Ca(2+). It depends on Zn(2+) as a cofactor. Widely expressed during embryogenesis including in the mesoderm, developing gut, central and peripheral nervous systems and imaginal disks. In the embryonic nervous system, expressed in neurons and glia. In third instar larvae, strongly expressed in the morphogenetic furrow of eye imaginal disks and in the optic lobe region of the brain. Expressed in posterior follicle cells in all mature stage 14 follicles but not in earlier follicles and is also expressed in some anterior follicle cells that help form dorsal eggshell structures.

It localises to the cell membrane. In terms of biological role, has metalloproteinase activity. Proteolytically cleaves the PGRP-LC receptor; involved in gut-fat body innate immunological communication (GFIC)-mediated activation of the imd/Relish signal transduction pathway. Required for larval tissue histolysis during metamorphosis and is involved in pupal head eversion and fusion of the wing imaginal tissue. Required for growth of the dorsal air sac primordium and development of the dorsal air sacs. Promotes embryonic motor axon fasciculation. Cleaves and activates frac to promote motor axon bundling during outgrowth. Promotes the reshaping of adult sensory neuron dendrites from a radial to lattice-like shape which occurs after eclosion by degrading the basement membrane on which the dendrites grow. Involved in inhibition of follicle stem cell proliferation by cleaving Dlp, inhibiting its interaction with wg and preventing Dlp-mediated spreading of wg to follicle stem cells to enhance their proliferation. Plays a role in wound healing. Involved in fat body dissociation which occurs during metamorphosis by degrading basement membrane components, leading to destruction of cell-basement membrane junctions. Required for posterior follicle cell degradation and ovulation. The protein is Matrix metalloproteinase-2 of Drosophila melanogaster (Fruit fly).